Here is a 137-residue protein sequence, read N- to C-terminus: Putative nickel-responsive regulator (137 aa).

H78, H89, H91, and C97 together coordinate Ni(2+).

It belongs to the transcriptional regulatory CopG/NikR family. It depends on Ni(2+) as a cofactor.

Transcriptional regulator. In Syntrophus aciditrophicus (strain SB), this protein is Putative nickel-responsive regulator.